A 904-amino-acid chain; its full sequence is UPF0182 protein CKL_0015 (904 aa).

7 helical membrane passes run Ser-9 to Ile-29, Leu-47 to Leu-67, Ile-96 to Tyr-116, Ile-157 to Val-177, Leu-208 to Ile-228, Tyr-253 to Val-273, and Ile-279 to Val-299.

It belongs to the UPF0182 family.

Its subcellular location is the cell membrane. The protein is UPF0182 protein CKL_0015 of Clostridium kluyveri (strain ATCC 8527 / DSM 555 / NBRC 12016 / NCIMB 10680 / K1).